The following is a 227-amino-acid chain: Ribonuclease 3 (227 aa).

Positions 4–133 constitute an RNase III domain; sequence FEKLETLLGY…LIAAIYLDSN (130 aa). Glutamate 46 provides a ligand contact to Mg(2+). Residue aspartate 50 is part of the active site. Asparagine 119 and glutamate 122 together coordinate Mg(2+). Residue glutamate 122 is part of the active site. The DRBM domain maps to 158-226; sequence DPKTALQEWA…ARCLLHRLKN (69 aa).

It belongs to the ribonuclease III family. In terms of assembly, homodimer. Requires Mg(2+) as cofactor.

It is found in the cytoplasm. It carries out the reaction Endonucleolytic cleavage to 5'-phosphomonoester.. In terms of biological role, digests double-stranded RNA. Involved in the processing of primary rRNA transcript to yield the immediate precursors to the large and small rRNAs (23S and 16S). Processes some mRNAs, and tRNAs when they are encoded in the rRNA operon. Processes pre-crRNA and tracrRNA of type II CRISPR loci if present in the organism. This is Ribonuclease 3 from Rickettsia typhi (strain ATCC VR-144 / Wilmington).